Reading from the N-terminus, the 351-residue chain is UDP-3-O-acylglucosamine N-acyltransferase (351 aa).

Histidine 257 (proton acceptor) is an active-site residue.

It belongs to the transferase hexapeptide repeat family. LpxD subfamily. As to quaternary structure, homotrimer.

The catalysed reaction is a UDP-3-O-[(3R)-3-hydroxyacyl]-alpha-D-glucosamine + a (3R)-hydroxyacyl-[ACP] = a UDP-2-N,3-O-bis[(3R)-3-hydroxyacyl]-alpha-D-glucosamine + holo-[ACP] + H(+). Its pathway is bacterial outer membrane biogenesis; LPS lipid A biosynthesis. Functionally, catalyzes the N-acylation of UDP-3-O-acylglucosamine using 3-hydroxyacyl-ACP as the acyl donor. Is involved in the biosynthesis of lipid A, a phosphorylated glycolipid that anchors the lipopolysaccharide to the outer membrane of the cell. The chain is UDP-3-O-acylglucosamine N-acyltransferase from Methylorubrum extorquens (strain CM4 / NCIMB 13688) (Methylobacterium extorquens).